Consider the following 769-residue polypeptide: Zinc finger protein 585B (769 aa).

A compositionally biased stretch (polar residues) spans methionine 1 to serine 12. The tract at residues methionine 1 to tyrosine 23 is disordered. Positions valine 27–proline 97 constitute a KRAB domain. 21 consecutive C2H2-type zinc fingers follow at residues tyrosine 158–histidine 180, tyrosine 186–histidine 208, tyrosine 214–histidine 236, histidine 242–histidine 264, tyrosine 270–histidine 292, tyrosine 298–histidine 320, serine 354–histidine 376, tyrosine 382–histidine 404, tyrosine 410–histidine 432, tyrosine 438–histidine 460, tyrosine 466–histidine 488, tyrosine 494–histidine 516, tyrosine 522–histidine 544, tyrosine 550–histidine 572, tyrosine 578–histidine 600, tyrosine 606–histidine 628, tyrosine 634–histidine 656, tyrosine 662–histidine 684, tyrosine 690–histidine 712, tyrosine 718–histidine 740, and tyrosine 746–histidine 768.

This sequence belongs to the krueppel C2H2-type zinc-finger protein family.

The protein resides in the nucleus. Functionally, may be involved in transcriptional regulation. In Pongo abelii (Sumatran orangutan), this protein is Zinc finger protein 585B (ZNF585B).